The primary structure comprises 249 residues: Triosephosphate isomerase (249 aa).

Position 9 to 11 (Asn-9 to Lys-11) interacts with substrate. His-91 serves as the catalytic Electrophile. Glu-163 serves as the catalytic Proton acceptor. Residues Gly-169, Ser-209, and Gly-230 to Gly-231 contribute to the substrate site.

This sequence belongs to the triosephosphate isomerase family. Homodimer.

The protein localises to the cytoplasm. It catalyses the reaction D-glyceraldehyde 3-phosphate = dihydroxyacetone phosphate. It functions in the pathway carbohydrate biosynthesis; gluconeogenesis. It participates in carbohydrate degradation; glycolysis; D-glyceraldehyde 3-phosphate from glycerone phosphate: step 1/1. Involved in the gluconeogenesis. Catalyzes stereospecifically the conversion of dihydroxyacetone phosphate (DHAP) to D-glyceraldehyde-3-phosphate (G3P). The chain is Triosephosphate isomerase from Halorhodospira halophila (strain DSM 244 / SL1) (Ectothiorhodospira halophila (strain DSM 244 / SL1)).